A 579-amino-acid polypeptide reads, in one-letter code: Arginine--tRNA ligase (579 aa).

Residues 127-137 (PNLAKEMHVGH) carry the 'HIGH' region motif.

Belongs to the class-I aminoacyl-tRNA synthetase family. In terms of assembly, monomer.

It localises to the cytoplasm. It carries out the reaction tRNA(Arg) + L-arginine + ATP = L-arginyl-tRNA(Arg) + AMP + diphosphate. The polypeptide is Arginine--tRNA ligase (Ectopseudomonas mendocina (strain ymp) (Pseudomonas mendocina)).